A 226-amino-acid polypeptide reads, in one-letter code: Choline transport system permease protein OpuBD (226 aa).

An ABC transmembrane type-1 domain is found at 22–202 (FGRHFLMSAY…VMAVGADLLM (181 aa)). The next 5 helical transmembrane spans lie at 27–47 (LMSAYGVLFAAVVGVPAGILI), 52–72 (RLSAWVFAVTNVIQTIPALAM), 73–93 (LAVLMLVMGLGANTVILSLFL), 148–168 (ALVIAIGITAIGTFVGAGGLG), and 182–202 (AIILAGAIPTAVMAVGADLLM).

Belongs to the binding-protein-dependent transport system permease family. CysTW subfamily.

The protein resides in the cell membrane. Its function is as follows. Involved in a high affinity multicomponent binding-protein-dependent transport system for choline; probably responsible for the translocation of the substrate across the membrane. This is Choline transport system permease protein OpuBD (opuBD) from Bacillus subtilis (strain 168).